Consider the following 160-residue polypeptide: uncharacterized protein (160 aa).

Residues 1–27 (MVIGRKAGIIIYVMHALLLLLLSFTFA) form the signal peptide.

This is an uncharacterized protein from Aquifex aeolicus (strain VF5).